A 564-amino-acid chain; its full sequence is uncharacterized protein (564 aa).

8 consecutive transmembrane segments (helical) span residues 12–32, 97–119, 139–161, 188–208, 213–233, 277–297, 306–326, and 348–368; these read TYYL…LFIL, MTAY…YVLL, AFAL…LALW, FVLG…YDAI, WNLM…FVEY, MTVH…ALLF, NVYL…AFWF, and FHFL…YLIW.

The protein localises to the cell membrane. This is an uncharacterized protein from Bacillus subtilis (strain 168).